The primary structure comprises 258 residues: Protein STAY-GREEN LIKE, chloroplastic (258 aa).

The protein belongs to the staygreen family. As to expression, strongly expressed in leaves, stems and panicles, and at lower levels in roots and seeds.

In terms of biological role, promotes chlorophyll degradation in leaves. May be involved in LHCI proteins degradation, regulating the balance between LHCI and LHCII. This Oryza sativa subsp. japonica (Rice) protein is Protein STAY-GREEN LIKE, chloroplastic.